The sequence spans 54 residues: Ovomucoid (54 aa).

The Kazal-like domain maps to 4-54 (VDCSDYPKPVCPLDYMPLCGSDSKTYSNKCNFCNAVVESSGTLTLRHFGKC). Cystine bridges form between Cys-6-Cys-36, Cys-14-Cys-33, and Cys-22-Cys-54.

In terms of processing, this is the only ovomucoid third domain known to be not glycosylated.

It localises to the secreted. In Struthio camelus (Common ostrich), this protein is Ovomucoid.